A 96-amino-acid chain; its full sequence is Co-chaperonin GroES (96 aa).

It belongs to the GroES chaperonin family. In terms of assembly, heptamer of 7 subunits arranged in a ring. Interacts with the chaperonin GroEL.

The protein localises to the cytoplasm. Functionally, together with the chaperonin GroEL, plays an essential role in assisting protein folding. The GroEL-GroES system forms a nano-cage that allows encapsulation of the non-native substrate proteins and provides a physical environment optimized to promote and accelerate protein folding. GroES binds to the apical surface of the GroEL ring, thereby capping the opening of the GroEL channel. This is Co-chaperonin GroES from Holospora obtusa.